The chain runs to 1279 residues: ATP-dependent helicase/nuclease subunit A (1279 aa).

The region spanning 4 to 499 (TKWTDEQRQA…VKLFKNFRSR (496 aa)) is the UvrD-like helicase ATP-binding domain. 25 to 32 (AGAGAGKT) serves as a coordination point for ATP. The UvrD-like helicase C-terminal domain maps to 526-853 (EEALKVGASY…RIMSIHKSKG (328 aa)).

Belongs to the helicase family. AddA subfamily. As to quaternary structure, heterodimer of AddA and AddB/RexB. Mg(2+) is required as a cofactor.

The catalysed reaction is Couples ATP hydrolysis with the unwinding of duplex DNA by translocating in the 3'-5' direction.. It catalyses the reaction ATP + H2O = ADP + phosphate + H(+). The heterodimer acts as both an ATP-dependent DNA helicase and an ATP-dependent, dual-direction single-stranded exonuclease. Recognizes the chi site generating a DNA molecule suitable for the initiation of homologous recombination. The AddA nuclease domain is required for chi fragment generation; this subunit has the helicase and 3' -&gt; 5' nuclease activities. This chain is ATP-dependent helicase/nuclease subunit A, found in Clostridium botulinum (strain Langeland / NCTC 10281 / Type F).